The sequence spans 441 residues: BTB/POZ domain-containing protein At4g30940 (441 aa).

A BTB domain is found at 6-74 (DRIKFNVGGR…LRTGDLNIPP (69 aa)).

The protein operates within protein modification; protein ubiquitination. May act as a substrate-specific adapter of an E3 ubiquitin-protein ligase complex (CUL3-RBX1-BTB) which mediates the ubiquitination and subsequent proteasomal degradation of target proteins. The polypeptide is BTB/POZ domain-containing protein At4g30940 (Arabidopsis thaliana (Mouse-ear cress)).